Consider the following 251-residue polypeptide: Hydroxyacylglutathione hydrolase (251 aa).

The Zn(2+) site is built by histidine 53, histidine 55, aspartate 57, histidine 58, histidine 110, aspartate 127, and histidine 165.

This sequence belongs to the metallo-beta-lactamase superfamily. Glyoxalase II family. Monomer. It depends on Zn(2+) as a cofactor.

It catalyses the reaction an S-(2-hydroxyacyl)glutathione + H2O = a 2-hydroxy carboxylate + glutathione + H(+). Its pathway is secondary metabolite metabolism; methylglyoxal degradation; (R)-lactate from methylglyoxal: step 2/2. Thiolesterase that catalyzes the hydrolysis of S-D-lactoyl-glutathione to form glutathione and D-lactic acid. In Shigella dysenteriae serotype 1 (strain Sd197), this protein is Hydroxyacylglutathione hydrolase.